A 458-amino-acid chain; its full sequence is Vasoactive intestinal polypeptide receptor 1 (458 aa).

The first 31 residues, M1 to V31, serve as a signal peptide directing secretion. Residues G32–S142 lie on the Extracellular side of the membrane. Cystine bridges form between C38/C209, C51/C73, C64/C106, C87/C123, and C216/C286. 4 N-linked (GlcNAc...) asparagine glycosylation sites follow: N59, N70, N101, and N105. Residues V143–L167 form a helical membrane-spanning segment. The Cytoplasmic portion of the chain corresponds to F168–R175. A helical membrane pass occupies residues N176–D197. Residues L198–K217 are Extracellular-facing. The helical transmembrane segment at A218–H242 threads the bilayer. Topologically, residues T243–Y255 are cytoplasmic. The helical transmembrane segment at F256 to V277 threads the bilayer. Residues R278 to S292 lie on the Extracellular side of the membrane. A helical membrane pass occupies residues S293 to I317. Topologically, residues G318 to R339 are cytoplasmic. Residues L340–F360 traverse the membrane as a helical segment. Over F361–E368 the chain is Extracellular. The chain crosses the membrane as a helical span at residues V369–L392. The Cytoplasmic portion of the chain corresponds to N393 to V458.

Belongs to the G-protein coupled receptor 2 family. In terms of assembly, interacts with ADCYAP1/PACAP; activated by both PACAP27 and PACAP38 neuropeptides. Interacts with VIP; the interaction results in VIPR1 activation.

It is found in the cell membrane. G protein-coupled receptor activated by the neuropeptides vasoactive intestinal peptide (VIP) and pituitary adenylate cyclase-activating polypeptide (ADCYAP1/PACAP). Binds VIP and both PACAP27 and PACAP38 bioactive peptides with the following order of ligand affinity VIP = PACAP27 &gt; PACAP38. Ligand binding causes a conformation change that triggers signaling via guanine nucleotide-binding proteins (G proteins) and modulates the activity of downstream effectors. Activates cAMP-dependent pathway. In Sus scrofa (Pig), this protein is Vasoactive intestinal polypeptide receptor 1 (VIPR1).